The chain runs to 174 residues: NADH-quinone oxidoreductase subunit B (174 aa).

[4Fe-4S] cluster-binding residues include Cys-51, Cys-52, Cys-116, and Cys-146.

It belongs to the complex I 20 kDa subunit family. In terms of assembly, NDH-1 is composed of 14 different subunits. Subunits NuoB, C, D, E, F, and G constitute the peripheral sector of the complex. [4Fe-4S] cluster serves as cofactor.

It localises to the cell inner membrane. The enzyme catalyses a quinone + NADH + 5 H(+)(in) = a quinol + NAD(+) + 4 H(+)(out). Functionally, NDH-1 shuttles electrons from NADH, via FMN and iron-sulfur (Fe-S) centers, to quinones in the respiratory chain. The immediate electron acceptor for the enzyme in this species is believed to be ubiquinone. Couples the redox reaction to proton translocation (for every two electrons transferred, four hydrogen ions are translocated across the cytoplasmic membrane), and thus conserves the redox energy in a proton gradient. This Anaplasma phagocytophilum (strain HZ) protein is NADH-quinone oxidoreductase subunit B.